The following is a 1544-amino-acid chain: Lysine-specific demethylase 5B (1544 aa).

The segment covering 1–14 (MEPATTLPPGPRPA) has biased composition (pro residues). The segment at 1 to 22 (MEPATTLPPGPRPALPLGGPGP) is disordered. In terms of domain architecture, JmjN spans 32-73 (CPVFEPSWEEFADPFAFIHKIRPIAEQTGICKVRPPPDWQPP). Residues 97–187 (TRVKLNFLDQ…ILNPYNLFLS (91 aa)) enclose the ARID domain. Glycyl lysine isopeptide (Lys-Gly) (interchain with G-Cter in SUMO2) cross-links involve residues K148, K204, K209, K242, K274, and K278. Residues 200–228 (TSDTKDKEYKPHDIPQRQSVQPAETCPPA) are disordered. The segment covering 202–214 (DTKDKEYKPHDIP) has biased composition (basic and acidic residues). The tract at residues 269 to 297 (NEKEMKSTIKQEPTEKKDCELESEKEKPK) is disordered. Residues 309–359 (LYVCLLCGSGNDEDRLLLCDGCDDSYHTFCLVPPLHDVPKGDWRCPKCLAQ) form a PHD-type 1 zinc finger. Y425 contributes to the 2-oxoglutarate binding site. The region spanning 453 to 619 (EYLDSGWNLN…LGRQCVEHYR (167 aa)) is the JmjC domain. Positions 499 and 501 each coordinate Fe cation. 2-oxoglutarate is bound by residues S507, N509, and K517. H587 is a Fe cation binding site. The C5HC2 zinc finger occupies 692–744 (CIKCKTTCFMSAISCSCKPGLLVCLHHVKELCSCPPYKYNLRYRYTLDDLYPM). K769 participates in a covalent cross-link: Glycyl lysine isopeptide (Lys-Gly) (interchain with G-Cter in SUMO2). K832 is modified (N6-acetyllysine). S986 carries the post-translational modification Phosphoserine. The segment at 1176–1224 (MKVCLCQKTPATPMIQCELCRDAFHTSCVAAPSISQSSRIWLCPHCRRS) adopts a PHD-type 2 zinc-finger fold. The span at 1297-1314 (QASATDKVSQPPGTTSFS) shows a compositional bias: polar residues. The segment at 1297 to 1318 (QASATDKVSQPPGTTSFSLPDD) is disordered. Residue S1328 is modified to Phosphoserine. The span at 1374–1388 (PSSVQQADRSSPVRS) shows a compositional bias: polar residues. The segment at 1374 to 1447 (PSSVQQADRS…IKLSHPKDMD (74 aa)) is disordered. Positions 1389–1427 (SSEKNDCLRGKRDAINSPERKLKRRPEREGLPSERWDRV) are enriched in basic and acidic residues. Positions 1428–1441 (KHMRTPQKKKIKLS) are enriched in basic residues. A Glycyl lysine isopeptide (Lys-Gly) (interchain with G-Cter in SUMO2) cross-link involves residue K1450. Position 1456 is a phosphoserine (S1456). A PHD-type 3 zinc finger spans residues 1484-1538 (DAICPAVSCLQPEGDEVDWVQCDGSCNQWFHQVCVGVSPEMAEKEDYICVRCTGK).

It belongs to the JARID1 histone demethylase family. In terms of assembly, interacts with FOXG1B, PAX9, MYC, MYCN and RB1. Interacts with HDAC1, HDAC4, HDAC5 and HDAC7. Interacts (via PHD-type 1 zinc finger) with histone H3 unmodified at 'Lys-4'; the interaction is inhibited when histone H3 is methylated at 'Arg-2' or 'Lys-4'. Fe(2+) is required as a cofactor. As to expression, present at highest levels in testis, where it is enriched in spermatogonia and pachytene cells (at protein level).

It is found in the nucleus. It carries out the reaction N(6),N(6),N(6)-trimethyl-L-lysyl(4)-[histone H3] + 3 2-oxoglutarate + 3 O2 = L-lysyl(4)-[histone H3] + 3 formaldehyde + 3 succinate + 3 CO2. Histone demethylase that demethylates 'Lys-4' of histone H3, thereby playing a central role in histone code. Does not demethylate histone H3 'Lys-9' or H3 'Lys-27'. Demethylates trimethylated, dimethylated and monomethylated H3 'Lys-4'. Acts as a transcriptional corepressor for FOXG1B and PAX9. Represses the CLOCK-BMAL1 heterodimer-mediated transcriptional activation of the core clock component PER2. This chain is Lysine-specific demethylase 5B (Kdm5b), found in Mus musculus (Mouse).